The following is a 575-amino-acid chain: Serine/threonine-protein kinase YPK1 (575 aa).

The interval 1–53 (MMSWKFGKKFKEGGFLSGKHHSSNNNSPSDTSRSTTPTPGNPHPEDAVKPPVP) is disordered. Low complexity predominate over residues 23-38 (SNNNSPSDTSRSTTPT). The Protein kinase domain occupies 245 to 500 (FELLKVIGKG…AQDIKNHPFF (256 aa)). ATP-binding positions include 251–259 (IGKGSFGKV) and K274. Catalysis depends on D368, which acts as the Proton acceptor. Residues 502-573 (KHINFTKLWN…SVSPLGESVG (72 aa)) enclose the AGC-kinase C-terminal domain. Residues S543 and S562 each carry the phosphoserine modification.

This sequence belongs to the protein kinase superfamily. AGC Ser/Thr protein kinase family. RAC subfamily.

The enzyme catalyses L-seryl-[protein] + ATP = O-phospho-L-seryl-[protein] + ADP + H(+). The catalysed reaction is L-threonyl-[protein] + ATP = O-phospho-L-threonyl-[protein] + ADP + H(+). Its function is as follows. Probable serine/threonine-protein kinase which may act in the sphingolipid-mediated signaling pathway. May act downstream of TORC2 (TOR complex 2) and PDK1 to regulate sphingolipid metabolism. In Cryptococcus neoformans var. grubii serotype A (strain H99 / ATCC 208821 / CBS 10515 / FGSC 9487) (Filobasidiella neoformans var. grubii), this protein is Serine/threonine-protein kinase YPK1.